The primary structure comprises 419 residues: Light-independent protochlorophyllide reductase subunit N (419 aa).

[4Fe-4S] cluster-binding residues include Cys-20, Cys-45, and Cys-102.

It belongs to the BchN/ChlN family. As to quaternary structure, protochlorophyllide reductase is composed of three subunits; BchL, BchN and BchB. Forms a heterotetramer of two BchB and two BchN subunits. It depends on [4Fe-4S] cluster as a cofactor.

It carries out the reaction chlorophyllide a + oxidized 2[4Fe-4S]-[ferredoxin] + 2 ADP + 2 phosphate = protochlorophyllide a + reduced 2[4Fe-4S]-[ferredoxin] + 2 ATP + 2 H2O. It participates in porphyrin-containing compound metabolism; bacteriochlorophyll biosynthesis (light-independent). Component of the dark-operative protochlorophyllide reductase (DPOR) that uses Mg-ATP and reduced ferredoxin to reduce ring D of protochlorophyllide (Pchlide) to form chlorophyllide a (Chlide). This reaction is light-independent. The NB-protein (BchN-BchB) is the catalytic component of the complex. The chain is Light-independent protochlorophyllide reductase subunit N from Chlorobaculum tepidum (strain ATCC 49652 / DSM 12025 / NBRC 103806 / TLS) (Chlorobium tepidum).